The primary structure comprises 63 residues: Large ribosomal subunit protein uL29 (63 aa).

This sequence belongs to the universal ribosomal protein uL29 family.

In Bordetella pertussis (strain Tohama I / ATCC BAA-589 / NCTC 13251), this protein is Large ribosomal subunit protein uL29.